The sequence spans 186 residues: Pterocarpan synthase 1 (186 aa).

Residues 1–21 (MAKSTFFVCLNLSLLFSLVTA) form the signal peptide. Asn125 carries an N-linked (GlcNAc...) asparagine glycan.

It belongs to the plant dirigent protein family. As to quaternary structure, homodimer.

The protein resides in the secreted. It localises to the extracellular space. Its subcellular location is the apoplast. It catalyses the reaction a (4R)-4,2'-dihydroxyisoflavan = a pterocarpan + H2O.. It carries out the reaction (3R,4R)-7,2'-dihydroxy-4'-methoxyisoflavanol = (-)-medicarpin + H2O. The enzyme catalyses (3R,4R)-3-(6-hydroxy-1,3-benzodioxol-5-yl)-3,4-dihydro-2H-chromene-4,7-diol = (-)-maackiain + H2O. The catalysed reaction is (3S,4R)-7,2'-dihydroxy-4'-methoxyisoflavanol = (+)-medicarpin + H2O. It catalyses the reaction (3R,4R)-7,2',4'-trihydroxyisoflavanol = (6aR,11aR)-3,9-dihydroxypterocarpan + H2O. Functionally, involved in pterocarpan phytoalexin biosynthesis. Catalyzes the last step in the biosynthesis of the phytoalexin medicarpin, and thereby contributes to plant defense reactions. Dirigent proteins impart stereoselectivity on the phenoxy radical-coupling reaction, yielding optically active lignans from two molecules of coniferyl alcohol in the biosynthesis of lignans, flavonolignans, and alkaloids and thus plays a central role in plant secondary metabolism. The chain is Pterocarpan synthase 1 from Glycine max (Soybean).